The sequence spans 678 residues: PTS system glucose-specific EIICBA component (678 aa).

Positions 3 to 414 (KKLFGQLQRI…FKYKTPGRED (412 aa)) constitute a PTS EIIC type-1 domain. 11 helical membrane-spanning segments follow: residues 16–36 (LMLP…GTAM), 63–83 (AGGI…AIGL), 89–109 (VAAI…GAFL), 126–146 (VLGI…GALA), 170–190 (FVPI…AWIW), 211–231 (LAVF…LHHI), 273–293 (FMQG…LAIY), 303–323 (VVAG…ITEP), 329–349 (LFVA…SFLI), 355–375 (VHLG…GVLP), and 382–402 (LVIP…RFLI). One can recognise a PTS EIIB type-1 domain in the interval 425 to 506 (SELPFNVLKA…SLIMKGEITK (82 aa)). Cysteine 447 (phosphocysteine intermediate; for EIIB activity) is an active-site residue. The region spanning 547-651 (DQVFAQKMMG…STVTPLIITN (105 aa)) is the PTS EIIA type-1 domain. Histidine 599 serves as the catalytic Tele-phosphohistidine intermediate; for EIIA activity.

It is found in the cell membrane. It catalyses the reaction N(pros)-phospho-L-histidyl-[protein] + D-glucose(out) = D-glucose 6-phosphate(in) + L-histidyl-[protein]. In terms of biological role, the phosphoenolpyruvate-dependent sugar phosphotransferase system (sugar PTS), a major carbohydrate active transport system, catalyzes the phosphorylation of incoming sugar substrates concomitantly with their translocation across the cell membrane. This system is involved in glucose transport. The chain is PTS system glucose-specific EIICBA component (ptsG) from Staphylococcus saprophyticus subsp. saprophyticus (strain ATCC 15305 / DSM 20229 / NCIMB 8711 / NCTC 7292 / S-41).